A 580-amino-acid polypeptide reads, in one-letter code: Adenine deaminase (580 aa).

Belongs to the metallo-dependent hydrolases superfamily. Adenine deaminase family. It depends on Mn(2+) as a cofactor.

The catalysed reaction is adenine + H2O + H(+) = hypoxanthine + NH4(+). This Listeria monocytogenes serovar 1/2a (strain ATCC BAA-679 / EGD-e) protein is Adenine deaminase.